We begin with the raw amino-acid sequence, 397 residues long: Succinyl-diaminopimelate desuccinylase (397 aa).

His-73 serves as a coordination point for Zn(2+). Asp-75 is a catalytic residue. Residue Asp-106 participates in Zn(2+) binding. The active-site Proton acceptor is Glu-140. Positions 141, 169, and 366 each coordinate Zn(2+).

It belongs to the peptidase M20A family. DapE subfamily. As to quaternary structure, homodimer. Zn(2+) is required as a cofactor. The cofactor is Co(2+).

It catalyses the reaction N-succinyl-(2S,6S)-2,6-diaminopimelate + H2O = (2S,6S)-2,6-diaminopimelate + succinate. It functions in the pathway amino-acid biosynthesis; L-lysine biosynthesis via DAP pathway; LL-2,6-diaminopimelate from (S)-tetrahydrodipicolinate (succinylase route): step 3/3. Functionally, catalyzes the hydrolysis of N-succinyl-L,L-diaminopimelic acid (SDAP), forming succinate and LL-2,6-diaminopimelate (DAP), an intermediate involved in the bacterial biosynthesis of lysine and meso-diaminopimelic acid, an essential component of bacterial cell walls. The polypeptide is Succinyl-diaminopimelate desuccinylase (Sinorhizobium medicae (strain WSM419) (Ensifer medicae)).